Reading from the N-terminus, the 328-residue chain is GTP cyclohydrolase MptA (328 aa).

The protein belongs to the GTP cyclohydrolase IV family. In terms of assembly, homodimer. It depends on Fe(2+) as a cofactor.

The enzyme catalyses GTP + H2O = 7,8-dihydroneopterin 2',3'-cyclic phosphate + formate + diphosphate + H(+). It participates in cofactor biosynthesis; 5,6,7,8-tetrahydromethanopterin biosynthesis. In terms of biological role, converts GTP to 7,8-dihydro-D-neopterin 2',3'-cyclic phosphate, the first intermediate in the biosynthesis of coenzyme methanopterin. This Methanospirillum hungatei JF-1 (strain ATCC 27890 / DSM 864 / NBRC 100397 / JF-1) protein is GTP cyclohydrolase MptA.